We begin with the raw amino-acid sequence, 612 residues long: Bifunctional lycopene cyclase/phytoene synthase (612 aa).

Residues 1 to 268 are lycopene beta-cyclase; it reads MGWEYAQVHL…IVFGLIACDN (268 aa). The next 7 helical transmembrane spans lie at 3-23, 31-51, 112-130, 148-168, 171-191, 203-223, and 246-266; these read WEYA…LAAV, LDVF…VKGL, LFFF…MILS, IAGQ…VSSG, GMYM…LWSI, NTAL…TFAL, and IEEA…LIAC. The phytoene synthase stretch occupies residues 275–612; it reads TFPEHFPRTK…IRVAWSALNK (338 aa).

It in the N-terminal section; belongs to the lycopene beta-cyclase family. This sequence in the C-terminal section; belongs to the phytoene/squalene synthase family.

The protein localises to the membrane. The enzyme catalyses all-trans-lycopene = gamma-carotene. It catalyses the reaction gamma-carotene = all-trans-beta-carotene. It carries out the reaction 2 (2E,6E,10E)-geranylgeranyl diphosphate = 15-cis-phytoene + 2 diphosphate. It functions in the pathway carotenoid biosynthesis; beta-carotene biosynthesis. The protein operates within carotenoid biosynthesis; phytoene biosynthesis; all-trans-phytoene from geranylgeranyl diphosphate: step 1/1. In terms of biological role, bifunctional enzyme; part of the car gene cluster that mediates the biosynthesis of neurosporaxanthin, a carboxylic apocarotenoid acting as an essential protective pigments and leading to orange pigmentation. CarAR catalyzes the first step of the pathway by converting geranylgeranyl diphosphate to phytoene, as well as the later cyclization step that transforms the carB product lycopene into gamma-carotene. CarAR also converts part of gamma-carotene into beta-carotene. Neurosporaxanthin is synthesized from geranyl-geranyl pyrophosphate (GGPP) through several enzymatic activities. Phytoene synthase activity performed by the bifunctional enzyme carAR first produces phytoene from geranyl-geranyl pyrophosphate (GGPP). The phytoene dehydrogenase carB then introduces 4 desaturations to lead to lycopene which is substrate of the carotene cyclase activity of carAR that leads to the production of gamma-carotene. CarB then performs a 5th desaturation reaction to yield torulene. Torulene is the substrate of the dioxidase carT that breaks the molecule, removing five carbon atoms to yield beta-apo-4'-carotenal, whereas the aldehyde dehydrogenase carD mediates the last step by converting beta-apo-4'-carotenal into neurosporaxanthin. In Fusarium fujikuroi (Bakanae and foot rot disease fungus), this protein is Bifunctional lycopene cyclase/phytoene synthase.